We begin with the raw amino-acid sequence, 338 residues long: 4-hydroxy-3-methylbut-2-enyl diphosphate reductase (338 aa).

Cysteine 21 serves as a coordination point for [4Fe-4S] cluster. (2E)-4-hydroxy-3-methylbut-2-enyl diphosphate is bound by residues histidine 50 and histidine 83. Residues histidine 50 and histidine 83 each contribute to the dimethylallyl diphosphate site. 2 residues coordinate isopentenyl diphosphate: histidine 50 and histidine 83. Cysteine 105 contacts [4Fe-4S] cluster. Histidine 133 is a binding site for (2E)-4-hydroxy-3-methylbut-2-enyl diphosphate. Histidine 133 is a binding site for dimethylallyl diphosphate. Histidine 133 provides a ligand contact to isopentenyl diphosphate. The active-site Proton donor is the glutamate 135. Residue threonine 173 participates in (2E)-4-hydroxy-3-methylbut-2-enyl diphosphate binding. Cysteine 203 contributes to the [4Fe-4S] cluster binding site. Serine 231, serine 232, asparagine 233, and serine 276 together coordinate (2E)-4-hydroxy-3-methylbut-2-enyl diphosphate. Residues serine 231, serine 232, asparagine 233, and serine 276 each contribute to the dimethylallyl diphosphate site. Isopentenyl diphosphate-binding residues include serine 231, serine 232, asparagine 233, and serine 276.

It belongs to the IspH family. [4Fe-4S] cluster serves as cofactor.

The enzyme catalyses isopentenyl diphosphate + 2 oxidized [2Fe-2S]-[ferredoxin] + H2O = (2E)-4-hydroxy-3-methylbut-2-enyl diphosphate + 2 reduced [2Fe-2S]-[ferredoxin] + 2 H(+). The catalysed reaction is dimethylallyl diphosphate + 2 oxidized [2Fe-2S]-[ferredoxin] + H2O = (2E)-4-hydroxy-3-methylbut-2-enyl diphosphate + 2 reduced [2Fe-2S]-[ferredoxin] + 2 H(+). It participates in isoprenoid biosynthesis; dimethylallyl diphosphate biosynthesis; dimethylallyl diphosphate from (2E)-4-hydroxy-3-methylbutenyl diphosphate: step 1/1. Its pathway is isoprenoid biosynthesis; isopentenyl diphosphate biosynthesis via DXP pathway; isopentenyl diphosphate from 1-deoxy-D-xylulose 5-phosphate: step 6/6. Catalyzes the conversion of 1-hydroxy-2-methyl-2-(E)-butenyl 4-diphosphate (HMBPP) into a mixture of isopentenyl diphosphate (IPP) and dimethylallyl diphosphate (DMAPP). Acts in the terminal step of the DOXP/MEP pathway for isoprenoid precursor biosynthesis. This Streptomyces avermitilis (strain ATCC 31267 / DSM 46492 / JCM 5070 / NBRC 14893 / NCIMB 12804 / NRRL 8165 / MA-4680) protein is 4-hydroxy-3-methylbut-2-enyl diphosphate reductase.